Here is a 290-residue protein sequence, read N- to C-terminus: 33 kDa chaperonin (290 aa).

2 disulfides stabilise this stretch: cysteine 235–cysteine 237 and cysteine 268–cysteine 271.

The protein belongs to the HSP33 family. Post-translationally, under oxidizing conditions two disulfide bonds are formed involving the reactive cysteines. Under reducing conditions zinc is bound to the reactive cysteines and the protein is inactive.

Its subcellular location is the cytoplasm. Redox regulated molecular chaperone. Protects both thermally unfolding and oxidatively damaged proteins from irreversible aggregation. Plays an important role in the bacterial defense system toward oxidative stress. This Streptococcus pyogenes serotype M6 (strain ATCC BAA-946 / MGAS10394) protein is 33 kDa chaperonin.